The sequence spans 99 residues: Large ribosomal subunit protein uL23 (99 aa).

This sequence belongs to the universal ribosomal protein uL23 family. In terms of assembly, part of the 50S ribosomal subunit. Contacts protein L29, and trigger factor when it is bound to the ribosome.

Functionally, one of the early assembly proteins it binds 23S rRNA. One of the proteins that surrounds the polypeptide exit tunnel on the outside of the ribosome. Forms the main docking site for trigger factor binding to the ribosome. The chain is Large ribosomal subunit protein uL23 from Ectopseudomonas mendocina (strain ymp) (Pseudomonas mendocina).